The following is a 360-amino-acid chain: Phospho-N-acetylmuramoyl-pentapeptide-transferase (360 aa).

Helical transmembrane passes span 27 to 47 (ILGV…VIVL), 73 to 93 (TMGG…WGDL), 97 to 117 (YVWV…VDDY), 145 to 165 (AFYL…VPLF), 168 to 188 (VAIP…VGTS), 199 to 219 (GLAI…AYLT), 236 to 256 (SGEL…FLWF), 263 to 283 (IFMG…IAVI), 288 to 308 (LVLF…ILQV), and 337 to 357 (KVIV…FATL).

The protein belongs to the glycosyltransferase 4 family. MraY subfamily. Mg(2+) serves as cofactor.

It localises to the cell inner membrane. It carries out the reaction UDP-N-acetyl-alpha-D-muramoyl-L-alanyl-gamma-D-glutamyl-meso-2,6-diaminopimeloyl-D-alanyl-D-alanine + di-trans,octa-cis-undecaprenyl phosphate = di-trans,octa-cis-undecaprenyl diphospho-N-acetyl-alpha-D-muramoyl-L-alanyl-D-glutamyl-meso-2,6-diaminopimeloyl-D-alanyl-D-alanine + UMP. The protein operates within cell wall biogenesis; peptidoglycan biosynthesis. Catalyzes the initial step of the lipid cycle reactions in the biosynthesis of the cell wall peptidoglycan: transfers peptidoglycan precursor phospho-MurNAc-pentapeptide from UDP-MurNAc-pentapeptide onto the lipid carrier undecaprenyl phosphate, yielding undecaprenyl-pyrophosphoryl-MurNAc-pentapeptide, known as lipid I. The sequence is that of Phospho-N-acetylmuramoyl-pentapeptide-transferase from Marinomonas sp. (strain MWYL1).